Reading from the N-terminus, the 610-residue chain is Membrane protein insertase YidC (610 aa).

Residues 7–27 (FFITIALSILILALWQVFYLG) form a helical membrane-spanning segment. Positions 36 to 82 (QARIEEQQRQAQQAAQNRQASSSTGDTPQMPANPDSIPGQGDTKAAG) are disordered. A compositionally biased stretch (low complexity) spans 44-55 (RQAQQAAQNRQA). 5 helical membrane passes run 358–378 (FDLL…FYLI), 387–407 (NFGV…FPLA), 458–478 (WPVL…YVTI), 510–530 (TVPH…TMFL), and 546–566 (IFTW…AGLV).

It belongs to the OXA1/ALB3/YidC family. Type 1 subfamily. Interacts with the Sec translocase complex via SecD. Specifically interacts with transmembrane segments of nascent integral membrane proteins during membrane integration.

Its subcellular location is the cell inner membrane. Functionally, required for the insertion and/or proper folding and/or complex formation of integral membrane proteins into the membrane. Involved in integration of membrane proteins that insert both dependently and independently of the Sec translocase complex, as well as at least some lipoproteins. Aids folding of multispanning membrane proteins. This is Membrane protein insertase YidC from Brucella suis biovar 1 (strain 1330).